Here is a 102-residue protein sequence, read N- to C-terminus: Urease subunit beta (102 aa).

Belongs to the urease beta subunit family. In terms of assembly, heterotrimer of UreA (gamma), UreB (beta) and UreC (alpha) subunits. Three heterotrimers associate to form the active enzyme.

It is found in the cytoplasm. The enzyme catalyses urea + 2 H2O + H(+) = hydrogencarbonate + 2 NH4(+). The protein operates within nitrogen metabolism; urea degradation; CO(2) and NH(3) from urea (urease route): step 1/1. This chain is Urease subunit beta, found in Methylobacillus flagellatus (strain ATCC 51484 / DSM 6875 / VKM B-1610 / KT).